Consider the following 597-residue polypeptide: MALSFFSGGGSASHAKYFDIRLDEDYIVFRGGEQEAASAHLSGKLVLCVSEPISIKHIRLHLTGISRVCWHLPSSSAGGGRKNWRERVFYEKTWKFRDAGKSKTEILPAGNYEYPFDVILEGSMPESVEGLSDTYVTYRFKAEIGRKYAKDIVVRRPLRIIRTLESSALELSHAMSVENIWPNKIEYSISTPTKAVIFGTSIRVDFKLIPLLKGLGIGQIISQLIETHDLTLNPEDPDAIRNTYKTTRTIINDEHTIDEENSLEIIDEAAEGFQFSRTLDLPKTLTRCLQDTDTRGIKVRHKLKFRVQLLNPDGHISELRATLPVSIFISPNLAIDDNNNLVDSSPQTTQRALDDLAQQAPPLYGEHQFDQLYSEVDPSGYRTPGPGSGPGTPFGTLSRNLSAENLASMNAITHTDISASALHHRLVNLDLRGHGRVSASEHDHLGVPSDNGPPSGSNTHGSNTHAPGSPELSRRASDEDVHDNIPSGMATPFIPHSAELETLSRVPSYSTAVRSSVRPHDSDLPDYQAVVAETVHMSAPQSPQQAHIRGSGTGRGSDSYFSAPMDFFHRPAFLHSRSHSHSDDERRIRLTQARGRA.

Disordered regions lie at residues 375 to 398 (EVDP…GTLS), 439 to 492 (ASEH…MATP), and 576 to 597 (SRSH…RGRA). Over residues 452-466 (GPPSGSNTHGSNTHA) the composition is skewed to polar residues. Residues 472–483 (LSRRASDEDVHD) are compositionally biased toward basic and acidic residues.

It belongs to the arrestin family. Interacts with hulA.

Functionally, component of the regulatory network controlling carbon source utilization through ubiquitination and deubiquitination involving creA, creB, creC, creD and acrB. May be involved in signaling by recognizing appropriately phosphorylated substrates via its arrestin domains and then recruit a HECT-type ubiquitin ligase such as hulA, leading to ubiquitination of the substrate, providing a link between ubiquitination and phosphorylation in protein regulation and stability. The polypeptide is HECT-type ubiquitin ligase-interacting protein creD (creD) (Emericella nidulans (strain FGSC A4 / ATCC 38163 / CBS 112.46 / NRRL 194 / M139) (Aspergillus nidulans)).